The following is a 269-amino-acid chain: NAD kinase (269 aa).

Asp-45 serves as the catalytic Proton acceptor. NAD(+) contacts are provided by residues 45-46 (DG), 121-122 (NE), Arg-147, Asp-149, 160-165 (TAYNRS), and Ala-184.

The protein belongs to the NAD kinase family. Requires a divalent metal cation as cofactor.

Its subcellular location is the cytoplasm. It carries out the reaction NAD(+) + ATP = ADP + NADP(+) + H(+). Involved in the regulation of the intracellular balance of NAD and NADP, and is a key enzyme in the biosynthesis of NADP. Catalyzes specifically the phosphorylation on 2'-hydroxyl of the adenosine moiety of NAD to yield NADP. In Pediococcus pentosaceus (strain ATCC 25745 / CCUG 21536 / LMG 10740 / 183-1w), this protein is NAD kinase.